Here is a 261-residue protein sequence, read N- to C-terminus: tRNA pseudouridine synthase A (261 aa).

Asp-51 serves as the catalytic Nucleophile. A substrate-binding site is contributed by Tyr-109.

It belongs to the tRNA pseudouridine synthase TruA family. As to quaternary structure, homodimer.

The enzyme catalyses uridine(38/39/40) in tRNA = pseudouridine(38/39/40) in tRNA. Functionally, formation of pseudouridine at positions 38, 39 and 40 in the anticodon stem and loop of transfer RNAs. The sequence is that of tRNA pseudouridine synthase A from Psychromonas ingrahamii (strain DSM 17664 / CCUG 51855 / 37).